A 229-amino-acid polypeptide reads, in one-letter code: Germin-like protein subfamily 1 member 7 (229 aa).

Residues 1–24 (MEGFLRFLVAKAILLALASSFVSC) form the signal peptide. Cysteine 34 and cysteine 50 are joined by a disulfide. The 152-residue stretch at 64–215 (SGLNIAGNTI…AFQLDVNVVK (152 aa)) folds into the Cupin type-1 domain. Asparagine 79 carries N-linked (GlcNAc...) asparagine glycosylation. Positions 112, 114, 119, and 161 each coordinate Mn(2+).

Belongs to the germin family. Oligomer (believed to be a pentamer but probably hexamer).

Its subcellular location is the secreted. The protein localises to the extracellular space. The protein resides in the apoplast. May play a role in plant defense. Probably has no oxalate oxidase activity even if the active site is conserved. The chain is Germin-like protein subfamily 1 member 7 from Arabidopsis thaliana (Mouse-ear cress).